The following is a 543-amino-acid chain: Chaperonin GroEL (543 aa).

ATP is bound by residues 29 to 32, 86 to 90, Gly-413, 476 to 478, and Asp-492; these read TLGP, DGTTT, and NAA.

This sequence belongs to the chaperonin (HSP60) family. In terms of assembly, forms a cylinder of 14 subunits composed of two heptameric rings stacked back-to-back. Interacts with the co-chaperonin GroES.

It is found in the cytoplasm. It catalyses the reaction ATP + H2O + a folded polypeptide = ADP + phosphate + an unfolded polypeptide.. Its function is as follows. Together with its co-chaperonin GroES, plays an essential role in assisting protein folding. The GroEL-GroES system forms a nano-cage that allows encapsulation of the non-native substrate proteins and provides a physical environment optimized to promote and accelerate protein folding. This chain is Chaperonin GroEL, found in Streptococcus pyogenes serotype M3 (strain SSI-1).